A 109-amino-acid polypeptide reads, in one-letter code: Large ribosomal subunit protein uL22 (109 aa).

The protein belongs to the universal ribosomal protein uL22 family. In terms of assembly, part of the 50S ribosomal subunit.

Its function is as follows. This protein binds specifically to 23S rRNA; its binding is stimulated by other ribosomal proteins, e.g. L4, L17, and L20. It is important during the early stages of 50S assembly. It makes multiple contacts with different domains of the 23S rRNA in the assembled 50S subunit and ribosome. Functionally, the globular domain of the protein is located near the polypeptide exit tunnel on the outside of the subunit, while an extended beta-hairpin is found that lines the wall of the exit tunnel in the center of the 70S ribosome. In Dechloromonas aromatica (strain RCB), this protein is Large ribosomal subunit protein uL22.